Reading from the N-terminus, the 1608-residue chain is Protein REDUCED CHLOROPLAST COVERAGE 3 (1608 aa).

Over residues 1 to 12 the composition is skewed to basic residues; sequence MAPRSSKGKSNN. Disordered stretches follow at residues 1-22 and 278-303; these read MAPR…KKKR and VSES…GRNG. One can recognise a Clu domain in the interval 288-564; it reads EDEHWGGNGG…KKETDVCGKP (277 aa). TPR repeat units lie at residues 848-881, 890-923, 932-965, and 974-1007; these read GRTL…MIAV, ACAY…NERE, MKSY…LHFT, and AATY…NKRL. Disordered stretches follow at residues 1194-1226, 1238-1292, 1369-1400, 1466-1499, and 1531-1552; these read VEES…RQPD, HNRN…ASGA, KQES…KTSD, TPRS…VSVD, and PAAL…KDSA. The Nuclear localization signal signature appears at 1217–1224; the sequence is GRKSRQRQ. 2 stretches are compositionally biased toward polar residues: residues 1242-1265 and 1373-1385; these read QDVQ…LSKS and QESA…LTSE. Residues 1535–1546 are compositionally biased toward polar residues; it reads SKTSPEAESGGT.

Its subcellular location is the nucleus. The protein resides in the cytoplasm. It is found in the cytosol. Functionally, may act as the scaffold of a protein complex, which sequesters key factors that are required for the G2 to M transition in meristematic tissues. Together with REC2, REC3 and FMT/CLU, contributes to the establishment of the cellular volume devoted to the chloroplast compartment. The chain is Protein REDUCED CHLOROPLAST COVERAGE 3 from Arabidopsis thaliana (Mouse-ear cress).